Here is a 307-residue protein sequence, read N- to C-terminus: Elongation factor Ts (307 aa).

The segment at 79 to 82 is involved in Mg(2+) ion dislocation from EF-Tu; it reads TDFV.

It belongs to the EF-Ts family.

The protein localises to the cytoplasm. Functionally, associates with the EF-Tu.GDP complex and induces the exchange of GDP to GTP. It remains bound to the aminoacyl-tRNA.EF-Tu.GTP complex up to the GTP hydrolysis stage on the ribosome. The sequence is that of Elongation factor Ts from Bartonella henselae (strain ATCC 49882 / DSM 28221 / CCUG 30454 / Houston 1) (Rochalimaea henselae).